Reading from the N-terminus, the 235-residue chain is Orotidine 5'-phosphate decarboxylase (235 aa).

Residues Asp12, Lys34, 61 to 70 (DLKFHDIPNT), Thr121, Arg182, Gln191, Gly211, and Arg212 contribute to the substrate site. The active-site Proton donor is the Lys63.

Belongs to the OMP decarboxylase family. Type 1 subfamily. As to quaternary structure, homodimer.

The enzyme catalyses orotidine 5'-phosphate + H(+) = UMP + CO2. Its pathway is pyrimidine metabolism; UMP biosynthesis via de novo pathway; UMP from orotate: step 2/2. Catalyzes the decarboxylation of orotidine 5'-monophosphate (OMP) to uridine 5'-monophosphate (UMP). This Marinomonas sp. (strain MWYL1) protein is Orotidine 5'-phosphate decarboxylase.